The chain runs to 42 residues: Thymosin beta-10 (42 aa).

Basic and acidic residues-rich tracts occupy residues 1–25 (MADK…ETQE) and 33–42 (ETIEQEKQAK). The interval 1–42 (MADKPDLGEINSFDKAKLKKTETQEKNTLPTKETIEQEKQAK) is disordered. N-acetylalanine is present on A2. The residue at position 4 (K4) is an N6-acetyllysine. S12 bears the Phosphoserine mark. K15 bears the N6-acetyllysine mark. Phosphothreonine occurs at positions 21, 23, and 34. K39 carries the N6-acetyllysine modification.

This sequence belongs to the thymosin beta family. Distributed in numerous types of tissues, including thymus, spleen, lung, liver and muscle.

The protein localises to the cytoplasm. It is found in the cytoskeleton. Plays an important role in the organization of the cytoskeleton. Binds to and sequesters actin monomers (G actin) and therefore inhibits actin polymerization. This is Thymosin beta-10 (TMSB10) from Bos taurus (Bovine).